We begin with the raw amino-acid sequence, 153 residues long: Xanthine-guanine phosphoribosyltransferase (153 aa).

Residues 37 to 38 (RG), Arg69, and 88 to 96 (DDLVDTGGT) contribute to the 5-phospho-alpha-D-ribose 1-diphosphate site. Residue Arg69 participates in GMP binding. Position 89 (Asp89) interacts with Mg(2+). Guanine is bound by residues Asp92 and Ile135. Xanthine contacts are provided by Asp92 and Ile135. Residues 92 to 96 (DTGGT) and 134 to 135 (WI) contribute to the GMP site.

The protein belongs to the purine/pyrimidine phosphoribosyltransferase family. XGPT subfamily. In terms of assembly, homotetramer. Mg(2+) is required as a cofactor.

Its subcellular location is the cell inner membrane. The catalysed reaction is GMP + diphosphate = guanine + 5-phospho-alpha-D-ribose 1-diphosphate. It catalyses the reaction XMP + diphosphate = xanthine + 5-phospho-alpha-D-ribose 1-diphosphate. The enzyme catalyses IMP + diphosphate = hypoxanthine + 5-phospho-alpha-D-ribose 1-diphosphate. The protein operates within purine metabolism; GMP biosynthesis via salvage pathway; GMP from guanine: step 1/1. Its pathway is purine metabolism; XMP biosynthesis via salvage pathway; XMP from xanthine: step 1/1. Its function is as follows. Purine salvage pathway enzyme that catalyzes the transfer of the ribosyl-5-phosphate group from 5-phospho-alpha-D-ribose 1-diphosphate (PRPP) to the N9 position of the 6-oxopurines guanine and xanthine to form the corresponding ribonucleotides GMP (guanosine 5'-monophosphate) and XMP (xanthosine 5'-monophosphate), with the release of PPi. To a lesser extent, also acts on hypoxanthine. The polypeptide is Xanthine-guanine phosphoribosyltransferase (Photorhabdus laumondii subsp. laumondii (strain DSM 15139 / CIP 105565 / TT01) (Photorhabdus luminescens subsp. laumondii)).